The primary structure comprises 181 residues: Adenylate kinase (181 aa).

10–15 (GAGKGT) is a binding site for ATP. The tract at residues 30–59 (STGDLFRDNITNETELGVEAKRYLDAGDLV) is NMP. Residues T31, R36, 57–59 (DLV), 85–88 (GYPR), and Q92 each bind AMP. The interval 126-132 (GRGRADD) is LID. R127 serves as a coordination point for ATP. Residues R129 and R140 each coordinate AMP. G166 contributes to the ATP binding site.

Belongs to the adenylate kinase family. As to quaternary structure, monomer.

The protein resides in the cytoplasm. It catalyses the reaction AMP + ATP = 2 ADP. The protein operates within purine metabolism; AMP biosynthesis via salvage pathway; AMP from ADP: step 1/1. Its function is as follows. Catalyzes the reversible transfer of the terminal phosphate group between ATP and AMP. Plays an important role in cellular energy homeostasis and in adenine nucleotide metabolism. This chain is Adenylate kinase, found in Mycobacterium sp. (strain MCS).